The chain runs to 208 residues: Putative 3-methyladenine DNA glycosylase (208 aa).

Belongs to the DNA glycosylase MPG family.

The chain is Putative 3-methyladenine DNA glycosylase from Prosthecochloris aestuarii (strain DSM 271 / SK 413).